The primary structure comprises 336 residues: Glycerol-3-phosphate dehydrogenase [NAD(P)+] (336 aa).

5 residues coordinate NADPH: S11, W12, R32, R33, and K110. Sn-glycerol 3-phosphate-binding residues include K110 and G140. A144 serves as a coordination point for NADPH. Sn-glycerol 3-phosphate-binding residues include K195, D248, S258, R259, and N260. K195 serves as the catalytic Proton acceptor. R259 is a binding site for NADPH. The NADPH site is built by V284 and E286.

It belongs to the NAD-dependent glycerol-3-phosphate dehydrogenase family.

The protein localises to the cytoplasm. It carries out the reaction sn-glycerol 3-phosphate + NAD(+) = dihydroxyacetone phosphate + NADH + H(+). The catalysed reaction is sn-glycerol 3-phosphate + NADP(+) = dihydroxyacetone phosphate + NADPH + H(+). It functions in the pathway membrane lipid metabolism; glycerophospholipid metabolism. Functionally, catalyzes the reduction of the glycolytic intermediate dihydroxyacetone phosphate (DHAP) to sn-glycerol 3-phosphate (G3P), the key precursor for phospholipid synthesis. This Nocardia farcinica (strain IFM 10152) protein is Glycerol-3-phosphate dehydrogenase [NAD(P)+].